A 596-amino-acid chain; its full sequence is Aspartate--tRNA(Asp/Asn) ligase (596 aa).

Glu-173 is an L-aspartate binding site. Positions 197 to 200 are aspartate; sequence QLFK. Arg-219 is an L-aspartate binding site. Residues 219 to 221 and Gln-228 each bind ATP; that span reads RDE. His-450 is an L-aspartate binding site. Position 485 (Glu-485) interacts with ATP. Position 492 (Arg-492) interacts with L-aspartate. 537-540 is a binding site for ATP; sequence GLDR.

It belongs to the class-II aminoacyl-tRNA synthetase family. Type 1 subfamily. As to quaternary structure, homodimer.

Its subcellular location is the cytoplasm. The enzyme catalyses tRNA(Asx) + L-aspartate + ATP = L-aspartyl-tRNA(Asx) + AMP + diphosphate. Aspartyl-tRNA synthetase with relaxed tRNA specificity since it is able to aspartylate not only its cognate tRNA(Asp) but also tRNA(Asn). Reaction proceeds in two steps: L-aspartate is first activated by ATP to form Asp-AMP and then transferred to the acceptor end of tRNA(Asp/Asn). This Hydrogenovibrio crunogenus (strain DSM 25203 / XCL-2) (Thiomicrospira crunogena) protein is Aspartate--tRNA(Asp/Asn) ligase.